The sequence spans 618 residues: UvrABC system protein C (618 aa).

In terms of domain architecture, GIY-YIG spans 13-92 (DKPGVYLMKN…IKKYRPKYNI (80 aa)). The 36-residue stretch at 204–239 (LDIVENFKLNMERAAENLEFEKAAMLRDKINIIEKI) folds into the UVR domain.

This sequence belongs to the UvrC family. In terms of assembly, interacts with UvrB in an incision complex.

It is found in the cytoplasm. In terms of biological role, the UvrABC repair system catalyzes the recognition and processing of DNA lesions. UvrC both incises the 5' and 3' sides of the lesion. The N-terminal half is responsible for the 3' incision and the C-terminal half is responsible for the 5' incision. This chain is UvrABC system protein C, found in Clostridium botulinum (strain Langeland / NCTC 10281 / Type F).